The following is a 470-amino-acid chain: Isocitrate dehydrogenase (NAD(+)), mitochondrial (470 aa).

A mitochondrion-targeting transit peptide spans 1–26; the sequence is MTRVERGRVLARAIERAVAHRASARR. NAD(+) contacts are provided by residues 138-140 and asparagine 159; that span reads TVT. Residues 157-163, arginine 193, tyrosine 200, lysine 275, and aspartate 319 each bind D-threo-isocitrate; that span reads SPNGAMR. Aspartate 319 serves as a coordination point for Mg(2+). NAD(+) is bound at residue lysine 324. Aspartate 343 serves as a coordination point for D-threo-isocitrate. Aspartate 343 and aspartate 347 together coordinate Mg(2+). Residues 380 to 385 and asparagine 399 contribute to the NAD(+) site; that span reads HGTVAD.

The protein belongs to the isocitrate and isopropylmalate dehydrogenases family. In terms of assembly, forms homodimers. Requires Mg(2+) as cofactor. Mn(2+) serves as cofactor.

The protein localises to the mitochondrion. The enzyme catalyses D-threo-isocitrate + NAD(+) = 2-oxoglutarate + CO2 + NADH. Its activity is regulated as follows. The homodimer exhibits allosteric regulation by isocitrate. Its function is as follows. Performs an essential role in the oxidative function of the tricarboxylic acid cycle and respiration. Catalyzes the decarboxylation of isocitrate to produce 2-oxoglutarate and generate NADH to provide electrons for energy production. The sequence is that of Isocitrate dehydrogenase (NAD(+)), mitochondrial from Ostreococcus tauri.